Consider the following 124-residue polypeptide: Small ribosomal subunit protein uS12 (124 aa).

Aspartate 89 bears the 3-methylthioaspartic acid mark. A disordered region spans residues 104–124 (TAGVKDRRQSRSKYGAKAPKE).

It belongs to the universal ribosomal protein uS12 family. Part of the 30S ribosomal subunit. Contacts proteins S8 and S17. May interact with IF1 in the 30S initiation complex.

In terms of biological role, with S4 and S5 plays an important role in translational accuracy. Interacts with and stabilizes bases of the 16S rRNA that are involved in tRNA selection in the A site and with the mRNA backbone. Located at the interface of the 30S and 50S subunits, it traverses the body of the 30S subunit contacting proteins on the other side and probably holding the rRNA structure together. The combined cluster of proteins S8, S12 and S17 appears to hold together the shoulder and platform of the 30S subunit. In Synechococcus sp. (strain CC9605), this protein is Small ribosomal subunit protein uS12.